A 566-amino-acid polypeptide reads, in one-letter code: Proline--tRNA ligase 1 (566 aa).

This sequence belongs to the class-II aminoacyl-tRNA synthetase family. ProS type 1 subfamily. Homodimer.

The protein resides in the cytoplasm. The catalysed reaction is tRNA(Pro) + L-proline + ATP = L-prolyl-tRNA(Pro) + AMP + diphosphate. Catalyzes the attachment of proline to tRNA(Pro) in a two-step reaction: proline is first activated by ATP to form Pro-AMP and then transferred to the acceptor end of tRNA(Pro). As ProRS can inadvertently accommodate and process non-cognate amino acids such as alanine and cysteine, to avoid such errors it has two additional distinct editing activities against alanine. One activity is designated as 'pretransfer' editing and involves the tRNA(Pro)-independent hydrolysis of activated Ala-AMP. The other activity is designated 'posttransfer' editing and involves deacylation of mischarged Ala-tRNA(Pro). The misacylated Cys-tRNA(Pro) is not edited by ProRS. The protein is Proline--tRNA ligase 1 of Bacillus cereus (strain ZK / E33L).